Here is a 137-residue protein sequence, read N- to C-terminus: Small heat shock protein IbpA (137 aa).

The region spanning 28-137 (SQSNGGYPPY…ANKPRRIEIN (110 aa)) is the sHSP domain.

Belongs to the small heat shock protein (HSP20) family. As to quaternary structure, monomer. Forms homomultimers of about 100-150 subunits at optimal growth temperatures. Conformation changes to monomers at high temperatures or high ionic concentrations.

The protein resides in the cytoplasm. Functionally, associates with aggregated proteins, together with IbpB, to stabilize and protect them from irreversible denaturation and extensive proteolysis during heat shock and oxidative stress. Aggregated proteins bound to the IbpAB complex are more efficiently refolded and reactivated by the ATP-dependent chaperone systems ClpB and DnaK/DnaJ/GrpE. Its activity is ATP-independent. The chain is Small heat shock protein IbpA from Citrobacter koseri (strain ATCC BAA-895 / CDC 4225-83 / SGSC4696).